A 304-amino-acid chain; its full sequence is Glycine--tRNA ligase alpha subunit (304 aa).

The protein belongs to the class-II aminoacyl-tRNA synthetase family. As to quaternary structure, tetramer of two alpha and two beta subunits.

It is found in the cytoplasm. It carries out the reaction tRNA(Gly) + glycine + ATP = glycyl-tRNA(Gly) + AMP + diphosphate. The chain is Glycine--tRNA ligase alpha subunit from Streptococcus agalactiae serotype III (strain NEM316).